A 478-amino-acid polypeptide reads, in one-letter code: Sugar transporter ERD6-like 18 (478 aa).

The next 12 helical transmembrane spans lie at 31–51 (ITAC…SFGV), 71–91 (IAQF…GALF), 110–130 (LLCI…WLNF), 133–153 (ISSG…IAEI), 162–180 (FTFT…VYFS), 188–208 (ILAL…FFVP), 270–290 (TLVV…SAVL), 306–326 (IGST…VILV), 333–353 (PLLL…GVAF), 367–387 (VFTF…LGGL), 407–427 (IVTL…NFLL), and 433–453 (GTFY…WLLV).

Belongs to the major facilitator superfamily. Sugar transporter (TC 2.A.1.1) family. As to expression, expressed in leaf vasculature, stem and flowers.

The protein resides in the membrane. In terms of biological role, sugar transporter. The sequence is that of Sugar transporter ERD6-like 18 (SFP2) from Arabidopsis thaliana (Mouse-ear cress).